The sequence spans 212 residues: Adenylate kinase (212 aa).

An ATP-binding site is contributed by 14 to 19; that stretch reads GSGKGT. Positions 34 to 63 are NMP; that stretch reads STGDLFRKKISEDSRFAAQIQNYLSSGSYV. AMP-binding positions include Thr35, Arg40, 61–63, 89–92, and Gln96; these read SYV and GYPR. The interval 126–163 is LID; sequence QRLFCQKCQKSYNLLLAKPKNGLKCDLDNTDLITRNDD. Arg127 is an ATP binding site. Residues Cys130 and Cys133 each coordinate Zn(2+). 136-137 contributes to the ATP binding site; that stretch reads SY. Residues Cys150 and Asp153 each coordinate Zn(2+). Positions 160 and 171 each coordinate AMP. Gln199 serves as a coordination point for ATP.

Belongs to the adenylate kinase family. In terms of assembly, monomer.

It localises to the cytoplasm. The enzyme catalyses AMP + ATP = 2 ADP. The protein operates within purine metabolism; AMP biosynthesis via salvage pathway; AMP from ADP: step 1/1. Functionally, catalyzes the reversible transfer of the terminal phosphate group between ATP and AMP. Plays an important role in cellular energy homeostasis and in adenine nucleotide metabolism. The sequence is that of Adenylate kinase from Mesomycoplasma hyopneumoniae (strain 232) (Mycoplasma hyopneumoniae).